Reading from the N-terminus, the 335-residue chain is Large ribosomal subunit protein uL3 (335 aa).

Disordered stretches follow at residues 1 to 35 (MPQPNRPRKGSMGFSPRKRAESEVPRFNSWPADDG), 234 to 256 (IGNLGPWNPSRVRSTVPQQGQTG), and 312 to 335 (AVRPNESPRLDPEVRYVSTASNQG). Positions 244–256 (RVRSTVPQQGQTG) are enriched in polar residues.

It belongs to the universal ribosomal protein uL3 family. As to quaternary structure, part of the 50S ribosomal subunit. Forms a cluster with proteins L14 and L24e.

One of the primary rRNA binding proteins, it binds directly near the 3'-end of the 23S rRNA, where it nucleates assembly of the 50S subunit. This chain is Large ribosomal subunit protein uL3, found in Halobacterium salinarum (strain ATCC 29341 / DSM 671 / R1).